Consider the following 173-residue polypeptide: NADH-ubiquinone oxidoreductase chain 6 (173 aa).

5 helical membrane-spanning segments follow: residues 1-21 (MTYFMLFLGLCFVLGGLGVAS), 27-47 (YGVVGLVLASVVGCGWLLSLG), 48-68 (VSFVSLVLFMVYLGGMLVVFV), 87-107 (VVGYGVSFIAVLVVGVVIGGL), and 139-159 (CGVGMFLVAGWGLLLTLFVVL).

Belongs to the complex I subunit 6 family.

The protein resides in the mitochondrion membrane. The enzyme catalyses a ubiquinone + NADH + 5 H(+)(in) = a ubiquinol + NAD(+) + 4 H(+)(out). Its function is as follows. Core subunit of the mitochondrial membrane respiratory chain NADH dehydrogenase (Complex I) that is believed to belong to the minimal assembly required for catalysis. Complex I functions in the transfer of electrons from NADH to the respiratory chain. The immediate electron acceptor for the enzyme is believed to be ubiquinone. In Synthliboramphus hypoleucus (Guadalupe murrelet), this protein is NADH-ubiquinone oxidoreductase chain 6 (MT-ND6).